Consider the following 416-residue polypeptide: Gamma-glutamyl phosphate reductase (416 aa).

The protein belongs to the gamma-glutamyl phosphate reductase family.

It is found in the cytoplasm. It carries out the reaction L-glutamate 5-semialdehyde + phosphate + NADP(+) = L-glutamyl 5-phosphate + NADPH + H(+). Its pathway is amino-acid biosynthesis; L-proline biosynthesis; L-glutamate 5-semialdehyde from L-glutamate: step 2/2. In terms of biological role, catalyzes the NADPH-dependent reduction of L-glutamate 5-phosphate into L-glutamate 5-semialdehyde and phosphate. The product spontaneously undergoes cyclization to form 1-pyrroline-5-carboxylate. The chain is Gamma-glutamyl phosphate reductase from Petrotoga mobilis (strain DSM 10674 / SJ95).